Here is a 650-residue protein sequence, read N- to C-terminus: MICOS complex subunit MIC60, mitochondrial (650 aa).

The N-terminal 34 residues, methionine 1–asparagine 34, are a transit peptide targeting the mitochondrion. The segment at arginine 26–lysine 74 is disordered. A compositionally biased stretch (polar residues) spans histidine 28–lysine 40. The Mitochondrial matrix segment spans residues alanine 35–lysine 74. The chain crosses the membrane as a helical span at residues valine 75–leucine 95. Over aspartate 96–histidine 549 the chain is Mitochondrial intermembrane. Disordered regions lie at residues glutamate 121–leucine 168, glutamine 239–isoleucine 267, and glutamate 284–threonine 304. Positions glutamate 284–glutamine 299 are enriched in low complexity. 2 coiled-coil regions span residues alanine 345–arginine 369 and lysine 396–alanine 430. A helical transmembrane segment spans residues phenylalanine 550–serine 570. Topologically, residues serine 571–threonine 650 are mitochondrial matrix.

This sequence belongs to the MICOS complex subunit Mic60 family. As to quaternary structure, component of the mitochondrial contact site and cristae organizing system (MICOS) complex. The MICOS complex associates with mitochondrial outer membrane proteins. Present in a large lipid-enriched complex called mitochondrial transmembrane lipoprotein (MTL) complex made of proteins located in the two mitochondrial membranes, including the TOM complex and the core components of the MICOS complex and containing at least digalactosyldiacylglycerol (DGDG). Binds to TOM40-1. Component of a mitochondrial large protein complex that contains, at least, MIC60, DGS1, TOM40, TOM20 proteins, and petC/RISP.

The protein resides in the mitochondrion inner membrane. Its function is as follows. Component of the MICOS complex, a large protein complex of the mitochondrial inner membrane that plays crucial roles in the maintenance of crista junctions, inner membrane architecture, and formation of contact sites to the outer membrane. Plays a role in keeping cristae membranes connected to the inner boundary membrane. Also promotes protein import via the mitochondrial intermembrane space assembly (MIA) pathway. Involved in the maintenance of mitochondria morphology. Binds to glycerolipids such as cardiolipin (CL). Contributes to the export of phosphatidylethanolamine (PE) from mitochondria and to the import of galactoglycerolipids from plastids during phosphate (Pi) starvation. Promotes lipid desorption from membranes, likely as an initial step for lipid transfer, and regulates probably the tethering between the inner and outer membranes of mitochondria by binding to TOM40 proteins. This chain is MICOS complex subunit MIC60, mitochondrial, found in Arabidopsis thaliana (Mouse-ear cress).